A 647-amino-acid chain; its full sequence is TNFAIP3-interacting protein 1 (647 aa).

Residues 39-72 adopt a coiled-coil conformation; it reads MQGIKMLGELLEESQMEASRLRQKAEELVKDSEL. A compositionally biased stretch (basic and acidic residues) spans 61–71; that stretch reads QKAEELVKDSE. The segment at 61–168 is disordered; sequence QKAEELVKDS…DLGPPPPEDS (108 aa). Ser77 carries the phosphoserine modification. The interval 95–425 is interaction with Nef; it reads TKVQVHPATS…SPLTRQREYQ (331 aa). Low complexity predominate over residues 102-115; the sequence is ATSTAATTTATATT. Over residues 143-155 the composition is skewed to polar residues; it reads EEQNSPETGSHPT. Positions 209-270 form a coiled coil; sequence SKVHKNEQRT…KKLLMNSSCK (62 aa). Ser297, Ser416, and Ser455 each carry phosphoserine. The stretch at 311-551 forms a coiled coil; the sequence is AAEKKVKLLE…KASGERYHME (241 aa). The tract at residues 444–601 is required for inhibitory activity of TNF-induced NF-kappa-B activation; that stretch reads ASPSSPPAAF…MEHPPPHPNS (158 aa). The segment at 465–523 is ubiquitin-binding domain (UBD); it reads KQELVTQNELLKQQVKIFEEDFQRERSDRERMNEEKEELKKQVEKLQAQVTLTNAQLKT. The short motif at 537 to 543 is the Nuclear localization signal element; sequence QKRKAKA. Tyr565 carries the phosphotyrosine modification. Arg584 carries the post-translational modification Asymmetric dimethylarginine. Arg612 carries the post-translational modification Asymmetric dimethylarginine; alternate. Omega-N-methylarginine; alternate is present on Arg612. The segment at 613 to 647 is disordered; it reads PPCAGIRNQSSQVMDPPPDRPAEPESADNDCDGPQ. Residues 637–647 are compositionally biased toward acidic residues; the sequence is ESADNDCDGPQ. Phosphoserine is present on Ser638.

In terms of assembly, interacts with TNFAIP3 and IKBKG (polyubiquitinated); facilitates TNFAIP3-mediated de-ubiquitination of NEMO/IKBKG. Interacts with polyubiquitin. Interacts with MAPK1, SELPLG and PIK3CD. Interacts with IRAK1 (polyubiquitinated). Interacts with MYD88; the interaction is indicative for participation in an activated TLR-signaling complex. Interacts with TAX1BP1. Phosphorylation at Tyr-565 by SRC-family kinases recruits phosphoinositide-3-kinase (PI3K) PIK3CD:p85 heterodimer which results in integrin activation and leukocyte adhesion to activated endothelium during inflammation. Ubiquitous. Abundant in heart and skeletal muscle and expressed at lower levels in thymus, liver, kidney, brain and intestinal tract.

The protein localises to the cytoplasm. The protein resides in the nucleus. Functionally, inhibits NF-kappa-B activation and TNF-induced NF-kappa-B-dependent gene expression by regulating TAX1BP1 and A20/TNFAIP3-mediated deubiquitination of IKBKG; proposed to link A20/TNFAIP3 to ubiquitinated IKBKG. Involved in regulation of EGF-induced ERK1/ERK2 signaling pathway; blocks MAPK3/MAPK1 nuclear translocation and MAPK1-dependent transcription. Increases cell surface CD4(T4) antigen expression. Involved in the anti-inflammatory response of macrophages and positively regulates TLR-induced activation of CEBPB. Involved in the prevention of autoimmunity; this function implicates binding to polyubiquitin. Involved in leukocyte integrin activation during inflammation; this function is mediated by association with SELPLG and dependent on phosphorylation by SRC-family kinases. The chain is TNFAIP3-interacting protein 1 (Tnip1) from Mus musculus (Mouse).